Reading from the N-terminus, the 45-residue chain is Putative metallothionein-like protein 1B (45 aa).

Belongs to the metallothionein superfamily. Type 15 family.

Functionally, metallothioneins have a high content of cysteine residues that bind various heavy metals. Confers tolerance to cadmium (Cd) and plays a role in Cd and zinc (Zn) homeostasis. The protein is Putative metallothionein-like protein 1B (MT1B) of Arabidopsis thaliana (Mouse-ear cress).